The following is a 300-amino-acid chain: Ribosome-inactivating protein 3 (300 aa).

Glu207 is an active-site residue.

Belongs to the ribosome-inactivating protein family. Type 1 RIP subfamily. Monomer. As to expression, accumulates to high levels in seeds.

It localises to the cytoplasm. It catalyses the reaction Endohydrolysis of the N-glycosidic bond at one specific adenosine on the 28S rRNA.. Its function is as follows. Possesses features of some constitutive defense agent. The coordinate Opaque-2-controlled synthesis of this protein and the major seed storage proteins (zeins) may provide the germinating seedling with both nutritional benefits and protection against pathogen invasion of the surrounding endosperm. In Zea mays (Maize), this protein is Ribosome-inactivating protein 3 (CRIP3).